The chain runs to 445 residues: MIHAERIRNLNGEEPDLRGSYVVYWMQASVRSHWNHALEYAIETANSLKKPLIVVFGLTDDFPNANSRHYRFLIEGLRDVRSNLRERGIQLVVERDSPPSVLLKYADDAAAAVTDRGYLDIQKEWVDEAAGALHIPLTQVESNVIVPVETASDKEEYSAGTFKPKIKRHLKRFMVPLRMRTLKMDSLDLEPGPEFEDAVRDFRAPEDLEPSVFRGGTSTALSIFSEFLREKLECFERYRNDPVKNCLSNMSPYLHFGQISPLYLALRASEAGECPEFLEELIVRRELSMNFVHYSDSYSSISCLPEWAQRTLMDHVADPREYEYSLRELESASTHDPYWNAAQQEMVITGKMHGYMRMYWGKKILEWTDHPARAYDIALYLNDRYEIDGRDPNGFAGVAWCFGKHDRAWAEREIFGKVRYMNDRGLKRKFRIDEYVDRIRGLMDE.

One can recognise a Photolyase/cryptochrome alpha/beta domain in the interval 20–148 (SYVVYWMQAS…QVESNVIVPV (129 aa)). Position 239 (Arg-239) interacts with DNA.

The protein belongs to the DNA photolyase class-2 family. FAD is required as a cofactor. The cofactor is coenzyme F420-(gamma-Glu)n.

It carries out the reaction cyclobutadipyrimidine (in DNA) = 2 pyrimidine residues (in DNA).. Its function is as follows. Involved in repair of UV radiation-induced DNA damage. Catalyzes the light-dependent monomerization (300-600 nm) of cyclobutyl pyrimidine dimers (in cis-syn configuration), which are formed between adjacent bases on the same DNA strand upon exposure to ultraviolet radiation. The sequence is that of Deoxyribodipyrimidine photo-lyase (phr) from Methanothermobacter thermautotrophicus (strain ATCC 29096 / DSM 1053 / JCM 10044 / NBRC 100330 / Delta H) (Methanobacterium thermoautotrophicum).